The sequence spans 964 residues: Glycine dehydrogenase (decarboxylating) (964 aa).

Polar residues predominate over residues 1-11 (MNSTLQNQTKT). The interval 1–21 (MNSTLQNQTKTNLEKVGTDPL) is disordered. An N6-(pyridoxal phosphate)lysine modification is found at Lys-713.

This sequence belongs to the GcvP family. As to quaternary structure, the glycine cleavage system is composed of four proteins: P, T, L and H. Pyridoxal 5'-phosphate is required as a cofactor.

The enzyme catalyses N(6)-[(R)-lipoyl]-L-lysyl-[glycine-cleavage complex H protein] + glycine + H(+) = N(6)-[(R)-S(8)-aminomethyldihydrolipoyl]-L-lysyl-[glycine-cleavage complex H protein] + CO2. In terms of biological role, the glycine cleavage system catalyzes the degradation of glycine. The P protein binds the alpha-amino group of glycine through its pyridoxal phosphate cofactor; CO(2) is released and the remaining methylamine moiety is then transferred to the lipoamide cofactor of the H protein. This chain is Glycine dehydrogenase (decarboxylating), found in Leptospira interrogans serogroup Icterohaemorrhagiae serovar copenhageni (strain Fiocruz L1-130).